We begin with the raw amino-acid sequence, 236 residues long: Uridylate kinase (236 aa).

10-13 contributes to the ATP binding site; it reads KLSG. Residue Gly-52 coordinates UMP. ATP is bound by residues Gly-53 and Arg-57. Residues Asp-72 and 133-140 contribute to the UMP site; that span reads TGNPFFTT. ATP contacts are provided by Thr-160, Tyr-166, and Asp-169.

The protein belongs to the UMP kinase family. Homohexamer.

It is found in the cytoplasm. The enzyme catalyses UMP + ATP = UDP + ADP. It participates in pyrimidine metabolism; CTP biosynthesis via de novo pathway; UDP from UMP (UMPK route): step 1/1. Its activity is regulated as follows. Inhibited by UTP. Functionally, catalyzes the reversible phosphorylation of UMP to UDP. This chain is Uridylate kinase, found in Ralstonia nicotianae (strain ATCC BAA-1114 / GMI1000) (Ralstonia solanacearum).